We begin with the raw amino-acid sequence, 369 residues long: Queuine tRNA-ribosyltransferase accessory subunit 2 (369 aa).

A disordered region spans residues 263-282; that stretch reads SSKLTEVEEENGNDSSNDQD. C308, C310, C313, and H339 together coordinate Zn(2+).

Belongs to the queuine tRNA-ribosyltransferase family. QTRT2 subfamily. Heterodimer of a catalytic subunit and an accessory subunit. Requires Zn(2+) as cofactor.

It localises to the cytoplasm. Its function is as follows. Non-catalytic subunit of the queuine tRNA-ribosyltransferase (TGT) that catalyzes the base-exchange of a guanine (G) residue with queuine (Q) at position 34 (anticodon wobble position) in tRNAs with GU(N) anticodons (tRNA-Asp, -Asn, -His and -Tyr), resulting in the hypermodified nucleoside queuosine (7-(((4,5-cis-dihydroxy-2-cyclopenten-1-yl)amino)methyl)-7-deazaguanosine). The polypeptide is Queuine tRNA-ribosyltransferase accessory subunit 2 (Trichoplax adhaerens (Trichoplax reptans)).